Reading from the N-terminus, the 211-residue chain is Imidazole glycerol phosphate synthase subunit HisH (211 aa).

The 207-residue stretch at Ser-5–Leu-211 folds into the Glutamine amidotransferase type-1 domain. Cys-83 serves as the catalytic Nucleophile. Residues His-192 and Glu-194 contribute to the active site.

Heterodimer of HisH and HisF.

It localises to the cytoplasm. It carries out the reaction 5-[(5-phospho-1-deoxy-D-ribulos-1-ylimino)methylamino]-1-(5-phospho-beta-D-ribosyl)imidazole-4-carboxamide + L-glutamine = D-erythro-1-(imidazol-4-yl)glycerol 3-phosphate + 5-amino-1-(5-phospho-beta-D-ribosyl)imidazole-4-carboxamide + L-glutamate + H(+). The enzyme catalyses L-glutamine + H2O = L-glutamate + NH4(+). It functions in the pathway amino-acid biosynthesis; L-histidine biosynthesis; L-histidine from 5-phospho-alpha-D-ribose 1-diphosphate: step 5/9. Functionally, IGPS catalyzes the conversion of PRFAR and glutamine to IGP, AICAR and glutamate. The HisH subunit catalyzes the hydrolysis of glutamine to glutamate and ammonia as part of the synthesis of IGP and AICAR. The resulting ammonia molecule is channeled to the active site of HisF. This is Imidazole glycerol phosphate synthase subunit HisH from Nocardia farcinica (strain IFM 10152).